The sequence spans 464 residues: Trigger factor (464 aa).

The PPIase FKBP-type domain occupies 162 to 243 (GDFVSIDLSA…VKSVKERELP (82 aa)). A disordered region spans residues 431 to 464 (IDTSEFFGKRPSGDGAADEDADQADESTTADAGE). The segment covering 446-455 (AADEDADQAD) has biased composition (acidic residues).

Belongs to the FKBP-type PPIase family. Tig subfamily.

The protein resides in the cytoplasm. The catalysed reaction is [protein]-peptidylproline (omega=180) = [protein]-peptidylproline (omega=0). Its function is as follows. Involved in protein export. Acts as a chaperone by maintaining the newly synthesized protein in an open conformation. Functions as a peptidyl-prolyl cis-trans isomerase. This Mycobacterium avium (strain 104) protein is Trigger factor.